Here is a 696-residue protein sequence, read N- to C-terminus: Elongation factor G (696 aa).

The region spanning 8–290 (ERYRNIGIMA…AVLDYLPSPL (283 aa)) is the tr-type G domain. Residues 17-24 (AHIDAGKT), 88-92 (DTPGH), and 142-145 (NKMD) contribute to the GTP site.

The protein belongs to the TRAFAC class translation factor GTPase superfamily. Classic translation factor GTPase family. EF-G/EF-2 subfamily.

It localises to the cytoplasm. Catalyzes the GTP-dependent ribosomal translocation step during translation elongation. During this step, the ribosome changes from the pre-translocational (PRE) to the post-translocational (POST) state as the newly formed A-site-bound peptidyl-tRNA and P-site-bound deacylated tRNA move to the P and E sites, respectively. Catalyzes the coordinated movement of the two tRNA molecules, the mRNA and conformational changes in the ribosome. This is Elongation factor G from Nitrosomonas europaea (strain ATCC 19718 / CIP 103999 / KCTC 2705 / NBRC 14298).